Here is a 404-residue protein sequence, read N- to C-terminus: Argininosuccinate synthase (404 aa).

Residues 10-18 and A37 each bind ATP; that span reads AYSGGLDTS. L-citrulline contacts are provided by Y89 and S94. Residue G119 participates in ATP binding. L-aspartate-binding residues include T121, N125, and D126. N125 serves as a coordination point for L-citrulline. Residues R129, S178, S187, E263, and Y275 each coordinate L-citrulline.

The protein belongs to the argininosuccinate synthase family. Type 1 subfamily. Homotetramer.

Its subcellular location is the cytoplasm. The enzyme catalyses L-citrulline + L-aspartate + ATP = 2-(N(omega)-L-arginino)succinate + AMP + diphosphate + H(+). Its pathway is amino-acid biosynthesis; L-arginine biosynthesis; L-arginine from L-ornithine and carbamoyl phosphate: step 2/3. The chain is Argininosuccinate synthase from Photobacterium profundum (strain SS9).